The primary structure comprises 439 residues: Chromosomal replication initiator protein DnaA (439 aa).

The tract at residues 1 to 75 is domain I, interacts with DnaA modulators; it reads MESWSRCLER…GIREVVLAIG (75 aa). Positions 75–101 are domain II; the sequence is GSRPKTTELTVPVDTTGRLSQTVPFNG. The interval 102 to 319 is domain III, AAA+ region; that stretch reads NLDTHYNFDN…GALNTLVARA (218 aa). ATP contacts are provided by Gly-147, Gly-149, Lys-150, and Thr-151. A domain IV, binds dsDNA region spans residues 320–439; sequence NFTGRAVTIE…WDKLMRKFSE (120 aa).

The protein belongs to the DnaA family. Oligomerizes as a right-handed, spiral filament on DNA at oriC.

The protein localises to the cytoplasm. Functionally, plays an essential role in the initiation and regulation of chromosomal replication. ATP-DnaA binds to the origin of replication (oriC) to initiate formation of the DNA replication initiation complex once per cell cycle. Binds the DnaA box (a 9 base pair repeat at the origin) and separates the double-stranded (ds)DNA. Forms a right-handed helical filament on oriC DNA; dsDNA binds to the exterior of the filament while single-stranded (ss)DNA is stabiized in the filament's interior. The ATP-DnaA-oriC complex binds and stabilizes one strand of the AT-rich DNA unwinding element (DUE), permitting loading of DNA polymerase. After initiation quickly degrades to an ADP-DnaA complex that is not apt for DNA replication. Binds acidic phospholipids. This chain is Chromosomal replication initiator protein DnaA, found in Xylella fastidiosa (strain Temecula1 / ATCC 700964).